Here is a 151-residue protein sequence, read N- to C-terminus: Ubiquitin-conjugating enzyme E2 2 (151 aa).

A disordered region spans residues 1–26 (MSTTARRRLMRDFKRMQQDPPQGVSA). The region spanning 4–150 (TARRRLMRDF…VRDTVEASWT (147 aa)) is the UBC core domain. Cys-88 acts as the Glycyl thioester intermediate in catalysis.

The protein belongs to the ubiquitin-conjugating enzyme family.

It localises to the cytoplasm. The protein localises to the nucleus. The enzyme catalyses S-ubiquitinyl-[E1 ubiquitin-activating enzyme]-L-cysteine + [E2 ubiquitin-conjugating enzyme]-L-cysteine = [E1 ubiquitin-activating enzyme]-L-cysteine + S-ubiquitinyl-[E2 ubiquitin-conjugating enzyme]-L-cysteine.. It functions in the pathway protein modification; protein ubiquitination. Functionally, catalyzes the covalent attachment of ubiquitin to other proteins. Plays a role in transcription regulation by catalyzing the monoubiquitination of histone H2B to form H2BK123ub1. H2BK123ub1 gives a specific tag for epigenetic transcriptional activation and is also a prerequisite for H3K4me and H3K79me formation. Also involved in postreplication repair of UV-damaged DNA, in N-end rule-dependent protein degradation and in sporulation. This chain is Ubiquitin-conjugating enzyme E2 2 (UBC2), found in Yarrowia lipolytica (strain CLIB 122 / E 150) (Yeast).